The primary structure comprises 220 residues: GTP cyclohydrolase 1 (220 aa).

Residues cysteine 113, histidine 116, and cysteine 184 each contribute to the Zn(2+) site.

The protein belongs to the GTP cyclohydrolase I family. As to quaternary structure, homomer.

It carries out the reaction GTP + H2O = 7,8-dihydroneopterin 3'-triphosphate + formate + H(+). It functions in the pathway cofactor biosynthesis; 7,8-dihydroneopterin triphosphate biosynthesis; 7,8-dihydroneopterin triphosphate from GTP: step 1/1. This chain is GTP cyclohydrolase 1, found in Hamiltonella defensa subsp. Acyrthosiphon pisum (strain 5AT).